A 41-amino-acid chain; its full sequence is Large ribosomal subunit protein bL36 (41 aa).

The protein belongs to the bacterial ribosomal protein bL36 family.

In Nitrobacter hamburgensis (strain DSM 10229 / NCIMB 13809 / X14), this protein is Large ribosomal subunit protein bL36.